A 295-amino-acid polypeptide reads, in one-letter code: Light-independent protochlorophyllide reductase iron-sulfur ATP-binding protein (295 aa).

Residues 39-44 (GIGKST) and Lys68 contribute to the ATP site. Ser43 serves as a coordination point for Mg(2+). Residues Cys124 and Cys158 each contribute to the [4Fe-4S] cluster site. ATP is bound by residues 209–210 (NR) and 233–235 (PDL).

Belongs to the NifH/BchL/ChlL family. As to quaternary structure, homodimer. Protochlorophyllide reductase is composed of three subunits; BchL, BchN and BchB. The cofactor is [4Fe-4S] cluster.

The enzyme catalyses chlorophyllide a + oxidized 2[4Fe-4S]-[ferredoxin] + 2 ADP + 2 phosphate = protochlorophyllide a + reduced 2[4Fe-4S]-[ferredoxin] + 2 ATP + 2 H2O. Its pathway is porphyrin-containing compound metabolism; bacteriochlorophyll biosynthesis (light-independent). Component of the dark-operative protochlorophyllide reductase (DPOR) that uses Mg-ATP and reduced ferredoxin to reduce ring D of protochlorophyllide (Pchlide) to form chlorophyllide a (Chlide). This reaction is light-independent. The L component serves as a unique electron donor to the NB-component of the complex, and binds Mg-ATP. This Rhodospirillum rubrum (strain ATCC 11170 / ATH 1.1.1 / DSM 467 / LMG 4362 / NCIMB 8255 / S1) protein is Light-independent protochlorophyllide reductase iron-sulfur ATP-binding protein.